Consider the following 642-residue polypeptide: MPVITLPDGSQRHFDHPVSVMDIARDIGPGLAKACIAGRVNGELVDACDLIDADATVAIITAKDQEGVDILRHSCAHLLGHAIKQLWPQTKMAIGPVIDNGFYYDVDLDHTLTQEDLERLDKRMHELAEKDYDVIKKKVSWQEARDAFVARDELYKVAILDENISHDDRPGLYHHEEYLDMCRGPHVPNMRFCHHFKLQKSSGAYWRGDSDNKMLQRIYGTAWADKKQLNAYLQRLEEAAKRDHRKIGKQLDLYHMQEEAPGMVFWHNDGWTIFRELEAFVRMKLKEYQYQEVKGPFMMDRVLWEKTGHWENYKDAMFTTSSENREYCIKPMNCPGHVQIFNQGLKSYRDLPLRMAEFGSCHRNEPSGSLHGLMRVRGFTQDDAHIFCTEEQIRDEVNSCIKMVYDMYSTFGFEKIVVKLSTRPEKRIGSDEIWDRAEEDLAAALQENGIPFEYQPGEGAFYGPKIEFTLHDCLDRAWQCGTVQLDFSLPGRLSASYVGENNERVVPVMIHRAILGSMERFIGILTEEFAGFFPTWLAPVQAVVMNITDSQAEYVEELSKKLQAAGIRVKSDLRNEKIGFKIREHTLRRVPYMLVCGDKEVEAGKVAVRTRRGKDLGVMSIDDVIKKLQQEIRSRSLHQLEE.

A TGS domain is found at 1-61; sequence MPVITLPDGS…DADATVAIIT (61 aa). The interval 243-534 is catalytic; sequence DHRKIGKQLD…LTEEFAGFFP (292 aa). The Zn(2+) site is built by Cys-334, His-385, and His-511.

It belongs to the class-II aminoacyl-tRNA synthetase family. Homodimer. Zn(2+) serves as cofactor.

It is found in the cytoplasm. It catalyses the reaction tRNA(Thr) + L-threonine + ATP = L-threonyl-tRNA(Thr) + AMP + diphosphate + H(+). Its function is as follows. Catalyzes the attachment of threonine to tRNA(Thr) in a two-step reaction: L-threonine is first activated by ATP to form Thr-AMP and then transferred to the acceptor end of tRNA(Thr). Also edits incorrectly charged L-seryl-tRNA(Thr). The polypeptide is Threonine--tRNA ligase (Edwardsiella ictaluri (strain 93-146)).